The primary structure comprises 272 residues: MTVLDDIIVGVKEDMEVRRGLVSLAELKERAANAAPARDAWAALGGPSSIRNDLKVIAEIKRRSPSKGDLASIADPASLAVQYADGGASVISVLTEQRRFGGSLADFDAVRAAVETPLLRKDFTVDEYQIWEARAHGADLILLIVAALSDAELADFSALSHELGMNVLVETHTEEEIERAVAAQAKIIGINVRNLKTLDVDRSVFGSLAGLIPAESVIVAESGVRGPEDVSHYAAGGANAILVGEALVSDSTPRERITEFKAAGAAAIAVRN.

This sequence belongs to the TrpC family.

The catalysed reaction is 1-(2-carboxyphenylamino)-1-deoxy-D-ribulose 5-phosphate + H(+) = (1S,2R)-1-C-(indol-3-yl)glycerol 3-phosphate + CO2 + H2O. The protein operates within amino-acid biosynthesis; L-tryptophan biosynthesis; L-tryptophan from chorismate: step 4/5. This Paenarthrobacter aurescens (strain TC1) protein is Indole-3-glycerol phosphate synthase.